The sequence spans 230 residues: uncharacterized protein (230 aa).

Residues 1–16 (MTCVNVCFFLFPPCHR) form the signal peptide. 4 helical membrane passes run 27 to 47 (VDLL…IPLI), 118 to 138 (LFFF…FLFF), 150 to 170 (FPIL…LSFL), and 172 to 191 (SLSH…LRVF).

It localises to the cytoplasm. The protein resides in the nucleus membrane. This is an uncharacterized protein from Schizosaccharomyces pombe (strain 972 / ATCC 24843) (Fission yeast).